Reading from the N-terminus, the 173-residue chain is Alpha-crystallin A chain (173 aa).

N-acetylmethionine is present on methionine 1. A required for complex formation with BFSP1 and BFSP2 region spans residues 1-63 (MDIAIQQPWF…RTVLDSGVSE (63 aa)). Glutamine 6 carries the deamidated glutamine; partial modification. At serine 45 the chain carries Phosphoserine. Glutamine 50 carries the deamidated glutamine; partial modification. The region spanning 52-162 (LFRTVLDSGV…GHSERAIPVS (111 aa)) is the sHSP domain. N6-acetyllysine occurs at positions 70 and 99. Histidine 100 is a Zn(2+) binding site. Asparagine 101 bears the Deamidated asparagine; partial mark. Residues glutamate 102 and histidine 107 each contribute to the Zn(2+) site. Serine 122 carries the post-translational modification Phosphoserine. Deamidated asparagine; partial is present on asparagine 123. The interval 144-173 (PKVPSGVDAGHSERAIPVSREEKPSSAPSS) is disordered. Over residues 153–167 (GHSERAIPVSREEKP) the composition is skewed to basic and acidic residues. Histidine 154 provides a ligand contact to Zn(2+). O-linked (GlcNAc) serine glycosylation is present at serine 162.

The protein belongs to the small heat shock protein (HSP20) family. Heteromer composed of three CRYAA and one CRYAB subunits. Inter-subunit bridging via zinc ions enhances stability, which is crucial as there is no protein turn over in the lens. Can also form homodimers and homotetramers (dimers of dimers) which serve as the building blocks of homooligomers. Within homooligomers, the zinc-binding motif is created from residues of 3 different molecules. His-100 and Glu-102 from one molecule are ligands of the zinc ion, and His-107 and His-154 residues from additional molecules complete the site with tetrahedral coordination geometry. Part of a complex required for lens intermediate filament formation composed of BFSP1, BFSP2 and CRYAA. Acetylation at Lys-70 may increase chaperone activity. Post-translationally, undergoes age-dependent proteolytical cleavage at the C-terminus.

Its subcellular location is the cytoplasm. The protein localises to the nucleus. Functionally, contributes to the transparency and refractive index of the lens. Acts as a chaperone, preventing aggregation of various proteins under a wide range of stress conditions. Required for the correct formation of lens intermediate filaments as part of a complex composed of BFSP1, BFSP2 and CRYAA. This chain is Alpha-crystallin A chain (CRYAA), found in Neovison vison (American mink).